The sequence spans 67 residues: Large ribosomal subunit protein bL35 (67 aa).

It belongs to the bacterial ribosomal protein bL35 family.

This chain is Large ribosomal subunit protein bL35, found in Leptothrix cholodnii (strain ATCC 51168 / LMG 8142 / SP-6) (Leptothrix discophora (strain SP-6)).